The primary structure comprises 212 residues: Imidazole glycerol phosphate synthase subunit HisH 2 (212 aa).

Residues 4–211 form the Glutamine amidotransferase type-1 domain; sequence HLGLIDYGMG…LDWLQRGAPI (208 aa). The active-site Nucleophile is C82. Active-site residues include H186 and E188.

Heterodimer of HisH and HisF.

It localises to the cytoplasm. It carries out the reaction 5-[(5-phospho-1-deoxy-D-ribulos-1-ylimino)methylamino]-1-(5-phospho-beta-D-ribosyl)imidazole-4-carboxamide + L-glutamine = D-erythro-1-(imidazol-4-yl)glycerol 3-phosphate + 5-amino-1-(5-phospho-beta-D-ribosyl)imidazole-4-carboxamide + L-glutamate + H(+). The catalysed reaction is L-glutamine + H2O = L-glutamate + NH4(+). The protein operates within amino-acid biosynthesis; L-histidine biosynthesis; L-histidine from 5-phospho-alpha-D-ribose 1-diphosphate: step 5/9. IGPS catalyzes the conversion of PRFAR and glutamine to IGP, AICAR and glutamate. The HisH subunit provides the glutamine amidotransferase activity that produces the ammonia necessary to HisF for the synthesis of IGP and AICAR. This chain is Imidazole glycerol phosphate synthase subunit HisH 2 (hisH2), found in Parasynechococcus marenigrum (strain WH8102).